The following is a 245-amino-acid chain: Ribonuclease 3 (245 aa).

The RNase III domain maps to 18-146; it reads LSKFLENLSI…FVGAIYLDSG (129 aa). Mg(2+) is bound at residue glutamate 59. Aspartate 63 is an active-site residue. 2 residues coordinate Mg(2+): aspartate 132 and glutamate 135. Glutamate 135 is an active-site residue. In terms of domain architecture, DRBM spans 173-242; that stretch reads DYKSLLQEYV…AEVALKAMEN (70 aa).

This sequence belongs to the ribonuclease III family. Homodimer. Mg(2+) is required as a cofactor.

It localises to the cytoplasm. The catalysed reaction is Endonucleolytic cleavage to 5'-phosphomonoester.. Functionally, digests double-stranded RNA. Involved in the processing of primary rRNA transcript to yield the immediate precursors to the large and small rRNAs (23S and 16S). Processes some mRNAs, and tRNAs when they are encoded in the rRNA operon. Processes pre-crRNA and tracrRNA of type II CRISPR loci if present in the organism. This chain is Ribonuclease 3, found in Borreliella burgdorferi (strain ATCC 35210 / DSM 4680 / CIP 102532 / B31) (Borrelia burgdorferi).